Consider the following 626-residue polypeptide: UvrABC system protein C (626 aa).

A GIY-YIG domain is found at 20–97 (ECSGVYKMLD…IKKFQPKFNI (78 aa)). In terms of domain architecture, UVR spans 207 to 242 (RELQENLSKKMQELSSQMRFEEAAEIRDRIKALSYV).

Belongs to the UvrC family. Interacts with UvrB in an incision complex.

It localises to the cytoplasm. Functionally, the UvrABC repair system catalyzes the recognition and processing of DNA lesions. UvrC both incises the 5' and 3' sides of the lesion. The N-terminal half is responsible for the 3' incision and the C-terminal half is responsible for the 5' incision. The sequence is that of UvrABC system protein C from Rickettsia typhi (strain ATCC VR-144 / Wilmington).